A 132-amino-acid polypeptide reads, in one-letter code: Large ribosomal subunit protein uL14 (132 aa).

Belongs to the universal ribosomal protein uL14 family. As to quaternary structure, the L3/L14/L24e cluster may contact the 16S rRNA in 2 intersubunit bridges. Part of the 50S ribosomal subunit. Forms a cluster with proteins L3 and L24e.

Functionally, forms part of two intersubunit bridges in the 70S ribosome. Binds to 23S rRNA. This Haloarcula marismortui (strain ATCC 43049 / DSM 3752 / JCM 8966 / VKM B-1809) (Halobacterium marismortui) protein is Large ribosomal subunit protein uL14.